The following is a 201-amino-acid chain: 3-isopropylmalate dehydratase small subunit (201 aa).

Belongs to the LeuD family. LeuD type 1 subfamily. As to quaternary structure, heterodimer of LeuC and LeuD.

It catalyses the reaction (2R,3S)-3-isopropylmalate = (2S)-2-isopropylmalate. It participates in amino-acid biosynthesis; L-leucine biosynthesis; L-leucine from 3-methyl-2-oxobutanoate: step 2/4. Catalyzes the isomerization between 2-isopropylmalate and 3-isopropylmalate, via the formation of 2-isopropylmaleate. In Shewanella sp. (strain MR-4), this protein is 3-isopropylmalate dehydratase small subunit.